The following is a 327-amino-acid chain: Phenylalanine--tRNA ligase alpha subunit (327 aa).

Mg(2+) is bound at residue E252.

It belongs to the class-II aminoacyl-tRNA synthetase family. Phe-tRNA synthetase alpha subunit type 1 subfamily. Tetramer of two alpha and two beta subunits. The cofactor is Mg(2+).

The protein localises to the cytoplasm. It catalyses the reaction tRNA(Phe) + L-phenylalanine + ATP = L-phenylalanyl-tRNA(Phe) + AMP + diphosphate + H(+). This Pectobacterium carotovorum subsp. carotovorum (strain PC1) protein is Phenylalanine--tRNA ligase alpha subunit.